A 1087-amino-acid polypeptide reads, in one-letter code: Kinesin-like protein KIN-14F (1087 aa).

Positions 1 to 110 (MDQGAMETLP…CILCLKGFYE (110 aa)) constitute a Calponin-homology (CH) domain. The disordered stretch occupies residues 136–155 (SSPPQYGIGSESTTDESVSL). The region spanning 377–705 (TIRVYCRVRP…LKFAQRVASI (329 aa)) is the Kinesin motor domain. Position 461 to 468 (461 to 468 (GQTGSGKT)) interacts with ATP. Residues 710–749 (ARSNKETGEIRDLKDEISSLKSAMEKKEAELEQLRSGSIR) adopt a coiled-coil conformation. 3 disordered regions span residues 740–858 (LEQL…PVSR), 923–949 (QGGV…FQKL), and 1004–1087 (DSTL…FMVP). Polar residues-rich tracts occupy residues 744-754 (RSGSIRNTTEC), 780-797 (PQPN…CSTG), and 836-856 (TDRA…NLPV). Positions 1017–1033 (EPPSKSKNAQRNSSKNS) are enriched in polar residues. The segment covering 1042-1054 (YAHEDTSLVDDKP) has biased composition (basic and acidic residues). Over residues 1076-1087 (SRSTHHARFMVP) the composition is skewed to basic residues.

The protein belongs to the TRAFAC class myosin-kinesin ATPase superfamily. Kinesin family. KIN-14 subfamily. Interacts (via C-terminus) with VDAC3. As to expression, expressed in roots, leaves, stems and flowers (at protein level).

It is found in the cytoplasm. It localises to the cytoskeleton. Its subcellular location is the mitochondrion. Its function is as follows. Required for keeping the ATP levels stable and balancing the aerobic respiration pathways during seed germination at low temperature. The protein is Kinesin-like protein KIN-14F of Arabidopsis thaliana (Mouse-ear cress).